We begin with the raw amino-acid sequence, 310 residues long: Coproporphyrin III ferrochelatase (310 aa).

Residues His184 and Glu265 each contribute to the Fe(2+) site.

This sequence belongs to the ferrochelatase family.

The protein resides in the cytoplasm. The enzyme catalyses Fe-coproporphyrin III + 2 H(+) = coproporphyrin III + Fe(2+). It participates in porphyrin-containing compound metabolism; protoheme biosynthesis. Functionally, involved in coproporphyrin-dependent heme b biosynthesis. Catalyzes the insertion of ferrous iron into coproporphyrin III to form Fe-coproporphyrin III. The sequence is that of Coproporphyrin III ferrochelatase from Limosilactobacillus reuteri (strain DSM 20016) (Lactobacillus reuteri).